The following is a 348-amino-acid chain: Serine/threonine-protein kinase SBK2 (348 aa).

The tract at residues 1 to 25 (MPGKQSEEGPAEAGASEDSEEEGLG) is disordered. The region spanning 62 to 330 (YEEVRPLGQG…IREHLGRPWR (269 aa)) is the Protein kinase domain. ATP-binding positions include 68 to 76 (LGQGCYGRV) and lysine 91. The active-site Proton acceptor is aspartate 183.

The protein belongs to the protein kinase superfamily. Ser/Thr protein kinase family. STKL subfamily.

It catalyses the reaction L-seryl-[protein] + ATP = O-phospho-L-seryl-[protein] + ADP + H(+). It carries out the reaction L-threonyl-[protein] + ATP = O-phospho-L-threonyl-[protein] + ADP + H(+). This is Serine/threonine-protein kinase SBK2 (SBK2) from Homo sapiens (Human).